Here is a 904-residue protein sequence, read N- to C-terminus: Polycystin-2 (904 aa).

Residues 1 to 102 form a disordered region; sequence MSSSRVRPQA…SSSGGVPGNF (102 aa). The Cytoplasmic segment spans residues 1 to 155; the sequence is MSSSRVRPQA…NSNREMYLKT (155 aa). Residues 8 to 20 show a composition bias toward low complexity; that stretch reads PQAPQSPAASASA. Residues 26–38 are compositionally biased toward basic and acidic residues; it reads EGIEMEKMHHEEV. Positions 86–96 are enriched in low complexity; the sequence is SVSTTSSSSSG. Residues 156–177 traverse the membrane as a helical segment; it reads VLREMITYILFLLTLCIITYGM. At 178 to 404 the chain is on the extracellular side; it reads VSTNMYYYTK…TVRLLRYVSS (227 aa). N235, N241, and N264 each carry an N-linked (GlcNAc...) asparagine glycan. Residues C267 and C280 are joined by a disulfide bond. N-linked (GlcNAc...) asparagine glycosylation occurs at N298. The chain crosses the membrane as a helical span at residues 405 to 425; sequence WDYFVGMCEVSFCLFVLYYLV. Topologically, residues 426-441 are cytoplasmic; the sequence is EEALEIRLHRLRYFKS. A helical membrane pass occupies residues 442-462; sequence LWNCLDVLIVALSVPAIIMNI. At 463–489 the chain is on the extracellular side; it reads CRTSAVSHRLHFLLENHSTYPNFEPLA. N478 is a glycosylation site (N-linked (GlcNAc...) asparagine). A helical membrane pass occupies residues 490–510; sequence RLQVHFNNLAAIIVFLSWVKL. Residues 511–534 are Cytoplasmic-facing; the sequence is FKFINFNKTMNQLSTTMSRCAKDL. A helical membrane pass occupies residues 535–556; it reads MGFAIMFFIVFLAYAQLAYLVF. Over 557 to 568 the chain is Extracellular; that stretch reads GTQVNDFSTFQA. The segment at residues 569–583 is an intramembrane region (pore-forming); sequence CIFTQFRIILGDFDF. Ca(2+) is bound at residue L578. The Selectivity filter signature appears at 578-580; it reads LGD. Over 584–591 the chain is Extracellular; sequence SEIEEADS. The chain crosses the membrane as a helical span at residues 592–612; sequence VLGPIYFTTFVFFIFMILLNM. The Cytoplasmic portion of the chain corresponds to 613–904; it reads FLAIINDTYS…DAAASGPAHL (292 aa). In terms of domain architecture, EF-hand 1 spans 687–722; that stretch reads HSDAEIEAIFAKYDLDGDQELTEHEHQQMRDDLEKE. Ca(2+) is bound by residues D700, D702, D704, E706, and E711. A compositionally biased stretch (basic and acidic residues) spans 708-732; that stretch reads TEHEHQQMRDDLEKEREDLDLEHSS. Disordered regions lie at residues 708–770 and 854–904; these read TEHE…SSGG and ESDD…PAHL. The segment at 740-759 is linker; sequence RSFSRSQDDSEEDDDEDSGH. The region spanning 768–786 is the EF-hand 2 domain; the sequence is SGGVSYEEFQVLVRRVDRM. Positions 770–809 form a coiled coil; it reads GVSYEEFQVLVRRVDRMEHSIGSIVSKIDAVIVKLEAMER. Positions 878–890 are enriched in low complexity; it reads LRPRSSRPPSSLS.

The protein belongs to the polycystin family. As to quaternary structure, homotetramer. Component of the heterotetrameric polycystin channel complex with pkd1; the tetramer contains one pkd1 chain and three pkd2 chains. Interacts with pkd1l1. Phosphorylated. Phosphorylation is important for protein function; a mutant human construct that lacks the N-terminal phosphorylation sites cannot complement a zebrafish pkd2-deficient mutant. Post-translationally, N-glycosylated. The four subunits in a tetramer probably differ in the extent of glycosylation; simultaneous glycosylation of all experimentally validated sites would probably create steric hindrance. In terms of processing, sumoylated by SUMO1; sumoylation regulates PKD2 membrane recycling. In terms of tissue distribution, detected along cilia and at the cilium basal body in Kupffer's vesicle at the 10 somite stage. Detected in heart at 48hpf. Detected in muscle and pronephric kidney at 48 hpf. Detected on trunk muscle sarcolemma and sarcomere, on ependymal cell cilia in brain, at the apical cell membrane in epithelial cells in the ear, at the lateral line organ and olfactory placode at 56 hpf. Detected in adult kidney (at protein level).

Its subcellular location is the basolateral cell membrane. The protein resides in the cell membrane. The protein localises to the sarcolemma. It is found in the cytoplasm. It localises to the myofibril. Its subcellular location is the sarcomere. The protein resides in the sarcoplasmic reticulum membrane. The protein localises to the apical cell membrane. It is found in the endoplasmic reticulum membrane. It localises to the cell projection. Its subcellular location is the cilium. The protein resides in the cytoskeleton. The protein localises to the cilium basal body. It is found in the cytoplasmic vesicle membrane. It catalyses the reaction K(+)(in) = K(+)(out). The enzyme catalyses Na(+)(in) = Na(+)(out). It carries out the reaction Ca(2+)(in) = Ca(2+)(out). With respect to regulation, channel activity is regulated by phosphorylation. Channel activity is regulated by intracellular Ca(2+). Functionally, forms a nonselective cation channel. Can function as a homotetrameric ion channel or can form heteromer with PKD1. Displays distinct function depending on its subcellular localization and regulation by its binding partners. In the primary cilium functions as a cation channel, with a preference for monovalent cations over divalent cations that allows K(+), Na(+) and Ca(2+) influx, with low selectivity for Ca(2+). In the endoplasmic reticulum, likely functions as a K(+) channel to facilitate Ca(2+) release. Required for normal oscillation of Ca(2+) levels within cilia; these oscillations of the intraciliary Ca(2+) levels can trigger cytoplasmic Ca(2+) signaling cascades. Required for normal temporal variation of the intracellular Ca(2+) levels in the heart. Plays a role in fluid-flow mechanosensation. Required for normal specification of the body left-right axis during embryogenesis, most likely via its role in ciliary Ca(2+) oscillations in Kupffer's vesicle. The sequence is that of Polycystin-2 from Danio rerio (Zebrafish).